The sequence spans 75 residues: Large ribosomal subunit protein bL31 (75 aa).

Zn(2+) is bound by residues C16, C18, C38, and C41.

This sequence belongs to the bacterial ribosomal protein bL31 family. Type A subfamily. As to quaternary structure, part of the 50S ribosomal subunit. The cofactor is Zn(2+).

Functionally, binds the 23S rRNA. The polypeptide is Large ribosomal subunit protein bL31 (Mycolicibacterium smegmatis (strain ATCC 700084 / mc(2)155) (Mycobacterium smegmatis)).